A 201-amino-acid polypeptide reads, in one-letter code: Small ribosomal subunit protein uS4 (201 aa).

The 61-residue stretch at 91–151 (SRLDNVVYRA…EKSRKMVWFD (61 aa)) folds into the S4 RNA-binding domain.

Belongs to the universal ribosomal protein uS4 family. In terms of assembly, part of the 30S ribosomal subunit. Contacts protein S5. The interaction surface between S4 and S5 is involved in control of translational fidelity.

In terms of biological role, one of the primary rRNA binding proteins, it binds directly to 16S rRNA where it nucleates assembly of the body of the 30S subunit. Its function is as follows. With S5 and S12 plays an important role in translational accuracy. This Corynebacterium kroppenstedtii (strain DSM 44385 / JCM 11950 / CIP 105744 / CCUG 35717) protein is Small ribosomal subunit protein uS4.